The primary structure comprises 751 residues: Catalase-peroxidase (751 aa).

Positions 1–21 are disordered; that stretch reads MSNESKCPFHQTAGGGTTNRD. Positions 90 to 244 form a cross-link, tryptophyl-tyrosyl-methioninium (Trp-Tyr) (with M-270); that stretch reads WHSAGTYRIG…LAAVQMGLIY (155 aa). His91 (proton acceptor) is an active-site residue. The interval 195–227 is disordered; it reads YGKDQVKAQPPGQGDLVAEPAKHGEEQNRDLSA. Over residues 214–227 the composition is skewed to basic and acidic residues; the sequence is PAKHGEEQNRDLSA. A cross-link (tryptophyl-tyrosyl-methioninium (Tyr-Met) (with W-90)) is located at residues 244-270; sequence YVNPEGPEGNPDPVASGKDIRETFGRM. Position 285 (His285) interacts with heme b. Residues 365–387 form a disordered region; it reads AHQWRPKEGKGAGTVPDAHDPGK.

The protein belongs to the peroxidase family. Peroxidase/catalase subfamily. In terms of assembly, homodimer or homotetramer. Heme b is required as a cofactor. In terms of processing, formation of the three residue Trp-Tyr-Met cross-link is important for the catalase, but not the peroxidase activity of the enzyme.

The enzyme catalyses H2O2 + AH2 = A + 2 H2O. It catalyses the reaction 2 H2O2 = O2 + 2 H2O. Bifunctional enzyme with both catalase and broad-spectrum peroxidase activity. The polypeptide is Catalase-peroxidase (Pseudomonas putida (strain ATCC 700007 / DSM 6899 / JCM 31910 / BCRC 17059 / LMG 24140 / F1)).